Reading from the N-terminus, the 320-residue chain is 1-aminocyclopropane-1-carboxylate oxidase (320 aa).

The Fe2OG dioxygenase domain maps to 156–256; the sequence is PTFGTKVSNY…RMSIASFYNP (101 aa). H180, D182, and H237 together coordinate Fe cation.

The protein belongs to the iron/ascorbate-dependent oxidoreductase family. Requires Fe cation as cofactor.

It carries out the reaction 1-aminocyclopropane-1-carboxylate + L-ascorbate + O2 = ethene + L-dehydroascorbate + hydrogen cyanide + CO2 + 2 H2O. It functions in the pathway alkene biosynthesis; ethylene biosynthesis via S-adenosyl-L-methionine; ethylene from S-adenosyl-L-methionine: step 2/2. This is 1-aminocyclopropane-1-carboxylate oxidase (ACO) from Brassica juncea (Indian mustard).